The following is a 617-amino-acid chain: Secretogranin-2 (617 aa).

The signal sequence occupies residues 1-27 (MAEAKTHWLGAALSLIPLIFLISGAEA). Residues 28 to 30 (ASF) constitute a propeptide that is removed on maturation. Residues 123-147 (NEPQSVPKENKPHALNSEKNFPIDM) form a disordered region. Y151 is modified (sulfotyrosine). A phosphoserine mark is found at S174, S268, S432, S532, S555, and S556. The tract at residues 552 to 583 (NQGSSQETDKLAPVSKRFPVGPPKNDDTPNRQ) is disordered.

This sequence belongs to the chromogranin/secretogranin protein family. In terms of assembly, interacts with Secretogranin III/SCG3.

It localises to the secreted. Functionally, neuroendocrine protein of the granin family that regulates the biogenesis of secretory granules. This Macaca fascicularis (Crab-eating macaque) protein is Secretogranin-2 (SCG2).